A 205-amino-acid chain; its full sequence is Holliday junction branch migration complex subunit RuvA (205 aa).

A domain I region spans residues 1–63 (MIDFVEGTLS…EDAILLYGFA (63 aa)). The domain II stretch occupies residues 64–142 (TRDERDLFRK…GYTPSAILTV (79 aa)). A flexible linker region spans residues 143–153 (AAGDLTAGEQA). The segment at 153-205 (AVSALNEALDALTALGYSDGELQKIRNTLSEKSKEGDGVEKLIKQGLALLMRG) is domain III.

Belongs to the RuvA family. Homotetramer. Forms an RuvA(8)-RuvB(12)-Holliday junction (HJ) complex. HJ DNA is sandwiched between 2 RuvA tetramers; dsDNA enters through RuvA and exits via RuvB. An RuvB hexamer assembles on each DNA strand where it exits the tetramer. Each RuvB hexamer is contacted by two RuvA subunits (via domain III) on 2 adjacent RuvB subunits; this complex drives branch migration. In the full resolvosome a probable DNA-RuvA(4)-RuvB(12)-RuvC(2) complex forms which resolves the HJ.

Its subcellular location is the cytoplasm. In terms of biological role, the RuvA-RuvB-RuvC complex processes Holliday junction (HJ) DNA during genetic recombination and DNA repair, while the RuvA-RuvB complex plays an important role in the rescue of blocked DNA replication forks via replication fork reversal (RFR). RuvA specifically binds to HJ cruciform DNA, conferring on it an open structure. The RuvB hexamer acts as an ATP-dependent pump, pulling dsDNA into and through the RuvAB complex. HJ branch migration allows RuvC to scan DNA until it finds its consensus sequence, where it cleaves and resolves the cruciform DNA. The protein is Holliday junction branch migration complex subunit RuvA of Brevibacillus brevis (strain 47 / JCM 6285 / NBRC 100599).